We begin with the raw amino-acid sequence, 75 residues long: Conotoxin Vc6a (75 aa).

The signal sequence occupies residues 1 to 22; it reads MKLTCVVIVAVLFLTANTFATA. Residues 23–49 constitute a propeptide that is removed on maturation; that stretch reads DDPRNGLENLFLKAHHEMNPEASKLNE. 3 disulfide bridges follow: C51–C66, C58–C69, and C65–C74.

Expressed by the venom duct.

Its subcellular location is the secreted. In Conus victoriae (Queen Victoria cone), this protein is Conotoxin Vc6a.